Consider the following 320-residue polypeptide: Ubiquinone biosynthesis protein COQ4, mitochondrial (320 aa).

Residues 1–31 (MFARSALGRSDQLVTALNSQKRQFVLTAATT) constitute a mitochondrion transit peptide. Zn(2+)-binding residues include H205, D206, H209, and E221.

The protein belongs to the COQ4 family. As to quaternary structure, component of a multi-subunit COQ enzyme complex, composed of at least COQ3, COQ4, COQ5, COQ6, COQ7 and COQ9. Zn(2+) is required as a cofactor.

Its subcellular location is the mitochondrion inner membrane. The catalysed reaction is a 4-hydroxy-3-methoxy-5-(all-trans-polyprenyl)benzoate + H(+) = a 2-methoxy-6-(all-trans-polyprenyl)phenol + CO2. It functions in the pathway cofactor biosynthesis; ubiquinone biosynthesis. Its function is as follows. Lyase that catalyzes the C1-decarboxylation of 4-hydroxy-3-methoxy-5-(all-trans-polyprenyl)benzoic acid into 2-methoxy-6-(all-trans-polyprenyl)phenol during ubiquinone biosynthesis. This Scheffersomyces stipitis (strain ATCC 58785 / CBS 6054 / NBRC 10063 / NRRL Y-11545) (Yeast) protein is Ubiquinone biosynthesis protein COQ4, mitochondrial.